Consider the following 447-residue polypeptide: N-succinylarginine dihydrolase (447 aa).

Substrate is bound by residues 19 to 28 (AGLSFGNEAS), Asn-110, and 137 to 138 (HR). Glu-174 is an active-site residue. Arg-212 provides a ligand contact to substrate. His-248 is an active-site residue. Residues Asp-250 and Asn-359 each coordinate substrate. Cys-365 acts as the Nucleophile in catalysis.

The protein belongs to the succinylarginine dihydrolase family. In terms of assembly, homodimer.

The enzyme catalyses N(2)-succinyl-L-arginine + 2 H2O + 2 H(+) = N(2)-succinyl-L-ornithine + 2 NH4(+) + CO2. It functions in the pathway amino-acid degradation; L-arginine degradation via AST pathway; L-glutamate and succinate from L-arginine: step 2/5. Catalyzes the hydrolysis of N(2)-succinylarginine into N(2)-succinylornithine, ammonia and CO(2). In Escherichia coli O1:K1 / APEC, this protein is N-succinylarginine dihydrolase.